Reading from the N-terminus, the 193-residue chain is Large ribosomal subunit protein bL25 (193 aa).

Belongs to the bacterial ribosomal protein bL25 family. CTC subfamily. As to quaternary structure, part of the 50S ribosomal subunit; part of the 5S rRNA/L5/L18/L25 subcomplex. Contacts the 5S rRNA. Binds to the 5S rRNA independently of L5 and L18.

In terms of biological role, this is one of the proteins that binds to the 5S RNA in the ribosome where it forms part of the central protuberance. This Oleidesulfovibrio alaskensis (strain ATCC BAA-1058 / DSM 17464 / G20) (Desulfovibrio alaskensis) protein is Large ribosomal subunit protein bL25.